The following is a 628-amino-acid chain: F-box only protein 21 (628 aa).

Positions 28–84 constitute an F-box domain; that stretch reads SCLVNLPGEVLEYILCCGSLTAADIGRVSSTCRRLRELCQSSGKVWKEQFRVRWPSL.

Directly interacts with SKP1 and CUL1.

Substrate-recognition component of the SCF (SKP1-CUL1-F-box protein)-type E3 ubiquitin ligase complex. The chain is F-box only protein 21 (FBXO21) from Homo sapiens (Human).